The chain runs to 138 residues: Basic phospholipase A2 ammodytoxin B (138 aa).

Positions 1 to 16 (MRTLWIVAVCLIGVEG) are cleaved as a signal peptide. Cystine bridges form between cysteine 42–cysteine 131, cysteine 44–cysteine 60, cysteine 59–cysteine 111, cysteine 65–cysteine 138, cysteine 66–cysteine 104, cysteine 73–cysteine 97, and cysteine 91–cysteine 102. Positions 43, 45, and 47 each coordinate Ca(2+). Histidine 63 is a catalytic residue. Residue aspartate 64 coordinates Ca(2+). Aspartate 105 is a catalytic residue.

The protein belongs to the phospholipase A2 family. Group II subfamily. D49 sub-subfamily. Monomer. Binds to calmodulin, coagulation factor X (F10), M-type PLA2 receptor (R-180), 14-3-3 proteins gamma (YWHAG) and epsilon (YWHAE), and R25, a mitochondrial membrane protein. The cofactor is Ca(2+). Expressed by the venom gland.

Its subcellular location is the secreted. The protein localises to the host cytoplasm. It localises to the host cytosol. It catalyses the reaction a 1,2-diacyl-sn-glycero-3-phosphocholine + H2O = a 1-acyl-sn-glycero-3-phosphocholine + a fatty acid + H(+). Its function is as follows. Snake venom phospholipase A2 (PLA2) that acts as a presynaptic neurotoxin, an inhibitor of blood coagulation, and has been found to bind with high affinity to intracellular proteins. The response of indirectly stimulated neuromuscular preparations to ammodytoxin (Atx) is triphasic. The first phase, the transient inhibition of the acetylcholine (ACh) release, starts soon after the addition of Atx and lasts for several minutes. This phase is probably independent of Atx enzymatic activity. The effect may be due to the specific binding of the toxin to presynaptic receptors. These receptors, called N-type receptors, are still unidentified. It is noteworthy that a neuronal isoform of the M-type PLA2 receptor (R180) has been identified as a high-affinity receptor for Atx in neuronal plasma membranes. It was demonstrated however that this receptor is not essential for expression of neurotoxicity by Atx. The second phase corresponds to an augmentation of neurotransmitter release. A peak is reached 10-20 minutes after exposure of the preparation to Atx and is followed by a gradual reduction. In this phase, the enzymatic activity of Atx of the mammalian is not significant. It is speculated that the increased release of neurotransmitter in this phase is induced by the interference of Atx with voltage-gated potassium channels. Measurements of ionic currents showed however that voltage-gated potassium channels are not affected by Atx. The third phase of the response of neuromuscular preparations to Atx, which corresponds to a complete and irreversible paralysis, is clearly dependent on the hydrolytic activity of the toxin. In addition to its presynaptic neurotoxicity, Atx shows an anticoagulant activity by binding with high affinity to activated coagulation factor X (F10) thus inhibiting the formation of the prothrombinase complex (FX/FV) and its activity (IC(50) is 82 nM). Surprisingly, Atx was discovered to bind intracellular proteins such as calmodulin (CaM), 14-3-3 proteins gamma (YWHAG) and epsilon (YWHAE) (by similarity with AtxC), as well as R25 (by similarity with AtxC), a mitochondrial integral membrane protein found in cerebral cortex. These findings raised a doubt about the dogma of the exclusively extracellular action of PLA2s, defended by the potential instability of these molecules in the reducing environment of the eukaryotic cytosol coupled with their possible inability to act as enzymes in this cellular compartment, due to too low concentration of calcium ions. This hypothesis was challenged efficiently by demonstrating the internalization of AtxA into a culture cells, but still remains to be directly demonstrated in vivo. PLA2 catalyzes the calcium-dependent hydrolysis of the 2-acyl groups in 3-sn-phosphoglycerides. This chain is Basic phospholipase A2 ammodytoxin B, found in Vipera ammodytes ammodytes (Western sand viper).